The chain runs to 1060 residues: MPHLPLASFRPPLWGLRPSWGLSRPQALCTQPEPHGSPVSRRNREAKQKRLREKQAALEAGLAEKSKIPAVPTKAWSHKEVVLYEIPTGPGEKKDVSGPLPPAYSPQYVEAAWYQWWVREGFFKPEYQARLPQATGETFSMCIPPPNVTGSLHIGHALTVAIQDALVRWHRMRGDRVLWIPGSDHAGIATQAMVEKQLWKEQRVRRHELSREDFLRAVWQWKHEKGGEIYEQLCALGASLDWDRECFTMDAGSSAAVTEAFVRLYNSGLLYRNRQLVNWSCTLRSAISDIEVESRPLPGRTVLQLPGCPTPVSFGLLASVAFPVDGEPDTEIVVGTTRPETLPGDVAVAVHPDDPRYTHLHGRQLRHPLTGQLLPLITDTTVQPHVGTGAVKVTPAHSPIDAEIGTRHGLTPLSVIAEDGTMTSLCGDWLQGLHRFVAREKIMCTLREQGLFRGLQEHPMVLPICSRSGDVVEYLLKSQWFVRCQEMGDLAAKAVESGALELWPSFHQKSWQHWFAHIGDWCVSRQLWWGHQIPAYRVIGENAEDDRKECWVVGRSEAEARAVAAKRTGRPEAELTLERDPDVLDTWFSSALFPFSALGWPRETPDLAHFYPLTLLETGSDLLMFWVGRMVMLGTQLTGQLPFSKVLLHSMVRDRQGRKMSKSLGNVLDPRDIISGQELQVLQAKLRDGNLDPGELAVAAAAQKKDFPYGIPECGTDALRFALCSHGILGGDLHLSVSEVLNYRHFCNKLWNALRFVLRALGDNFVPQPAEEVTPSSPMDAWILSRLAFAASECERGFLSRELSLVTHTLYHFWLHNLCDVYLEAVKPVLSSVPRPPGPPQVLFSCADVGLRLLAPLMPFLAEELWQRLPPRPGGPLAPSICVAPYPSTRSLEFWRQPELERCFSRVQEVVQALRALRATYQLTKARPQVLLQCSDPGEQGLVQPFLEPLGILSHCGAVGFLSPGAAAPSGWALTPLGDTMKIYMELQGLVDPQSQLPRLTARRQKLQKQLDDLLNRTMSEGLAERQQRISSLHLELSKLDQAASYLQQLMDEAPSAREL.

A mitochondrion-targeting transit peptide spans 1–15; the sequence is MPHLPLASFRPPLWG. The tract at residues 25 to 50 is disordered; the sequence is PQALCTQPEPHGSPVSRRNREAKQKR. A 'HIGH' region motif is present at residues 146–156; sequence PNVTGSLHIGH. N6-acetyllysine is present on Lys548. Residues 659-663 carry the 'KMSKS' region motif; it reads KMSKS. Lys662 provides a ligand contact to ATP.

The protein belongs to the class-I aminoacyl-tRNA synthetase family.

It is found in the mitochondrion. It catalyses the reaction tRNA(Val) + L-valine + ATP = L-valyl-tRNA(Val) + AMP + diphosphate. Its function is as follows. Catalyzes the attachment of valine to tRNA(Val) in a two-step reaction: valine is first activated by ATP to form Val-AMP and then transferred to the acceptor end of tRNA(Val). This is Valine--tRNA ligase, mitochondrial (Vars2) from Mus musculus (Mouse).